A 249-amino-acid chain; its full sequence is 5'-nucleotidase SurE (249 aa).

A divalent metal cation contacts are provided by D8, D9, S39, and N91.

Belongs to the SurE nucleotidase family. The cofactor is a divalent metal cation.

It is found in the cytoplasm. The enzyme catalyses a ribonucleoside 5'-phosphate + H2O = a ribonucleoside + phosphate. In terms of biological role, nucleotidase that shows phosphatase activity on nucleoside 5'-monophosphates. In Haemophilus influenzae (strain PittEE), this protein is 5'-nucleotidase SurE.